The chain runs to 423 residues: Tyrosine--tRNA ligase (423 aa).

Y35 is a binding site for L-tyrosine. Residues 40–49 carry the 'HIGH' region motif; sequence PTAPSLHAGH. Y170 and Q174 together coordinate L-tyrosine. The short motif at 230–234 is the 'KMSKS' region element; sequence KFGKS. K233 is an ATP binding site. One can recognise an S4 RNA-binding domain in the interval 355 to 412; sequence DLITDLLVATGLSASKGAARRTIAEGGVSVNNMKIDSDEWTPQASDFLHGRWLVLRRG.

It belongs to the class-I aminoacyl-tRNA synthetase family. TyrS type 1 subfamily. Homodimer.

The protein localises to the cytoplasm. The catalysed reaction is tRNA(Tyr) + L-tyrosine + ATP = L-tyrosyl-tRNA(Tyr) + AMP + diphosphate + H(+). In terms of biological role, catalyzes the attachment of tyrosine to tRNA(Tyr) in a two-step reaction: tyrosine is first activated by ATP to form Tyr-AMP and then transferred to the acceptor end of tRNA(Tyr). This Mycobacterium sp. (strain KMS) protein is Tyrosine--tRNA ligase.